A 539-amino-acid chain; its full sequence is CTP synthase (539 aa).

The interval 1–267 (MTKFIFVTGG…DDLVIKRLDL (267 aa)) is amidoligase domain. Ser13 lines the CTP pocket. Residue Ser13 participates in UTP binding. 14 to 19 (SLGKGI) serves as a coordination point for ATP. Position 54 (Tyr54) interacts with L-glutamine. Residue Asp71 coordinates ATP. The Mg(2+) site is built by Asp71 and Glu141. Residues 148–150 (DIE), 188–193 (KTKPTQ), and Lys224 each bind CTP. Residues 188-193 (KTKPTQ) and Lys224 each bind UTP. 240–242 (RDA) is an ATP binding site. A Glutamine amidotransferase type-1 domain is found at 293 to 535 (TIGLVGKYVS…IEAANKYKEA (243 aa)). Gly355 contacts L-glutamine. Catalysis depends on Cys382, which acts as the Nucleophile; for glutamine hydrolysis. L-glutamine is bound by residues 383–386 (LGMQ), Glu406, and Arg463. Active-site residues include His508 and Glu510.

It belongs to the CTP synthase family. In terms of assembly, homotetramer.

It carries out the reaction UTP + L-glutamine + ATP + H2O = CTP + L-glutamate + ADP + phosphate + 2 H(+). The catalysed reaction is L-glutamine + H2O = L-glutamate + NH4(+). It catalyses the reaction UTP + NH4(+) + ATP = CTP + ADP + phosphate + 2 H(+). It functions in the pathway pyrimidine metabolism; CTP biosynthesis via de novo pathway; CTP from UDP: step 2/2. Its activity is regulated as follows. Allosterically activated by GTP, when glutamine is the substrate; GTP has no effect on the reaction when ammonia is the substrate. The allosteric effector GTP functions by stabilizing the protein conformation that binds the tetrahedral intermediate(s) formed during glutamine hydrolysis. Inhibited by the product CTP, via allosteric rather than competitive inhibition. In terms of biological role, catalyzes the ATP-dependent amination of UTP to CTP with either L-glutamine or ammonia as the source of nitrogen. Regulates intracellular CTP levels through interactions with the four ribonucleotide triphosphates. The protein is CTP synthase of Staphylococcus carnosus (strain TM300).